A 337-amino-acid chain; its full sequence is S-adenosylmethionine:tRNA ribosyltransferase-isomerase (337 aa).

Belongs to the QueA family. As to quaternary structure, monomer.

Its subcellular location is the cytoplasm. The catalysed reaction is 7-aminomethyl-7-carbaguanosine(34) in tRNA + S-adenosyl-L-methionine = epoxyqueuosine(34) in tRNA + adenine + L-methionine + 2 H(+). The protein operates within tRNA modification; tRNA-queuosine biosynthesis. Functionally, transfers and isomerizes the ribose moiety from AdoMet to the 7-aminomethyl group of 7-deazaguanine (preQ1-tRNA) to give epoxyqueuosine (oQ-tRNA). The protein is S-adenosylmethionine:tRNA ribosyltransferase-isomerase of Legionella pneumophila (strain Corby).